We begin with the raw amino-acid sequence, 205 residues long: Small ribosomal subunit protein uS4 (205 aa).

One can recognise an S4 RNA-binding domain in the interval 94–157 (SRLDTVVYRM…QQIPLIQESI (64 aa)).

Belongs to the universal ribosomal protein uS4 family. In terms of assembly, part of the 30S ribosomal subunit. Contacts protein S5. The interaction surface between S4 and S5 is involved in control of translational fidelity.

Its function is as follows. One of the primary rRNA binding proteins, it binds directly to 16S rRNA where it nucleates assembly of the body of the 30S subunit. Functionally, with S5 and S12 plays an important role in translational accuracy. The protein is Small ribosomal subunit protein uS4 of Rickettsia prowazekii (strain Madrid E).